We begin with the raw amino-acid sequence, 75 residues long: Defensin-like protein 58 (75 aa).

A signal peptide spans 1–23 (MNITKRYVVIFFLVMLTKSLSNS). Disulfide bonds link C39/C73, C43/C66, C52/C71, and C56/C72.

Belongs to the DEFL family.

The protein localises to the secreted. The protein is Defensin-like protein 58 of Arabidopsis thaliana (Mouse-ear cress).